The following is an 82-amino-acid chain: Putative membrane protein insertion efficiency factor (82 aa).

It belongs to the UPF0161 family.

Its subcellular location is the cell inner membrane. Could be involved in insertion of integral membrane proteins into the membrane. The chain is Putative membrane protein insertion efficiency factor from Francisella tularensis subsp. novicida (strain U112).